A 353-amino-acid chain; its full sequence is Sulfate/thiosulfate import ATP-binding protein CysA (353 aa).

Residues 3-237 (IQVKNIEKHF…PATPFVFDFL (235 aa)) enclose the ABC transporter domain. 35–42 (GPSGCGKT) provides a ligand contact to ATP.

It belongs to the ABC transporter superfamily. Sulfate/tungstate importer (TC 3.A.1.6) family. In terms of assembly, the complex is composed of two ATP-binding proteins (CysA), two transmembrane proteins (CysT and CysW) and a solute-binding protein (CysP).

The protein localises to the cell inner membrane. The enzyme catalyses sulfate(out) + ATP + H2O = sulfate(in) + ADP + phosphate + H(+). The catalysed reaction is thiosulfate(out) + ATP + H2O = thiosulfate(in) + ADP + phosphate + H(+). In terms of biological role, part of the ABC transporter complex CysAWTP involved in sulfate/thiosulfate import. Responsible for energy coupling to the transport system. The chain is Sulfate/thiosulfate import ATP-binding protein CysA from Acinetobacter baylyi (strain ATCC 33305 / BD413 / ADP1).